Here is a 441-residue protein sequence, read N- to C-terminus: MDNYFGTDGMRGKVGVEPITADFFLKLGWAVGSVLAKRAKASVIIGKDTRVSGYLFESALEAGFLSAGVDVGLLGPMPTPAVAYLTQTYNASAGVVISASHNNFQDNGVKFFSAKGLKLSSQYQSEIEKKLAETMISVGADKIGKAYRYEQPLGRYIEFCKSTFDRTQSLLGLNIVIDCANGATYHIAQSVFSELGANINIINNTPDGFNINEHCGATDTKYLQQVVLESKADLGIAFDGDGDRLIMIDENGELVDGDELVFIIAKAWQSQGRLVNNTVVGTKMSNLGMHHALRDLDIKFIEADVGDRFVMEKMQKSGSILGGEGSGHIICLNKTTSGDGIISALQVLEVLVKSQSSLAKLKQSMEKYPQILINVKTQARINLKNYTKLQRTQLAVEQTLGDESRVLIRVSGTEPLIRVMVEAKDKIIAQQGAEKLSNIFK.

Ser100 (phosphoserine intermediate) is an active-site residue. Ser100, Asp239, Asp241, and Asp243 together coordinate Mg(2+). Ser100 bears the Phosphoserine mark.

The protein belongs to the phosphohexose mutase family. It depends on Mg(2+) as a cofactor. Activated by phosphorylation.

It carries out the reaction alpha-D-glucosamine 1-phosphate = D-glucosamine 6-phosphate. Functionally, catalyzes the conversion of glucosamine-6-phosphate to glucosamine-1-phosphate. In Ruthia magnifica subsp. Calyptogena magnifica, this protein is Phosphoglucosamine mutase.